An 89-amino-acid chain; its full sequence is Small ribosomal subunit protein uS15 (89 aa).

The protein belongs to the universal ribosomal protein uS15 family. As to quaternary structure, part of the 30S ribosomal subunit. Forms a bridge to the 50S subunit in the 70S ribosome, contacting the 23S rRNA.

Its function is as follows. One of the primary rRNA binding proteins, it binds directly to 16S rRNA where it helps nucleate assembly of the platform of the 30S subunit by binding and bridging several RNA helices of the 16S rRNA. Functionally, forms an intersubunit bridge (bridge B4) with the 23S rRNA of the 50S subunit in the ribosome. This chain is Small ribosomal subunit protein uS15, found in Chlorobium luteolum (strain DSM 273 / BCRC 81028 / 2530) (Pelodictyon luteolum).